A 430-amino-acid polypeptide reads, in one-letter code: Ethylene-responsive transcription factor WRI1 (430 aa).

Over residues 1 to 26 (MKKRLTTSTCSSSPSSSVSSSTTTSS) the composition is skewed to low complexity. Residues 1–66 (MKKRLTTSTC…PASTRRSSIY (66 aa)) form a disordered region. Over residues 53–63 (NPTSPASTRRS) the composition is skewed to polar residues. The AP2/ERF 1 DNA-binding region spans 65–131 (IYRGVTRHRW…WGPDTILNFP (67 aa)). Thr-70 carries the post-translational modification Phosphothreonine; by KIN10. Phosphoserine; by KIN10 is present on Ser-166. A DNA-binding region (AP2/ERF 2) is located at residues 167–225 (KYRGVARHHHNGRWEARIGRVFGNKYLYLGTYNTQEEAAAAYDMAAIEYRGANAVTNFD). The segment covering 260-274 (VETREAKEEPREEVK) has biased composition (basic and acidic residues). Disordered regions lie at residues 260–297 (VETR…EQQE) and 398–422 (SPPS…TTTT).

It belongs to the AP2/ERF transcription factor family. AP2 subfamily. As to quaternary structure, interacts with KIN10 and KIN11. Post-translationally, ubiquitinated. In terms of processing, the phosphorylation at Thr-70 and Ser-166 by KIN10 facilitates its degradation via the proteasomal pathway. Mostly expressed in siliques, especially in seeds. Also detected in roots and flowers, and, to a lower extent, in leaves stems and seedlings.

Its subcellular location is the nucleus. With respect to regulation, down-regulated by KIN10 that controls its protein stability under a phosphorylation-dependent manner. In terms of biological role, may be involved in the regulation of gene expression by stress factors and by components of stress signal transduction pathways. Transcriptional activator involved in the activation of a subset of sugar-responsive genes and the control of carbon flow from sucrose import to oil accumulation in developing seeds. Binds to the GCC-box pathogenesis-related promoter element. Promotes sugar uptake and seed oil accumulation by glycolysis. Required for embryo development, seed germination and, indirectly, for seedling establishment. Negative regulator of the ABA-mediated germination inhibition. This is Ethylene-responsive transcription factor WRI1 (WRI1) from Arabidopsis thaliana (Mouse-ear cress).